The following is a 311-amino-acid chain: Methionyl-tRNA formyltransferase (311 aa).

(6S)-5,6,7,8-tetrahydrofolate is bound at residue 110 to 113 (SLLP).

It belongs to the Fmt family.

It carries out the reaction L-methionyl-tRNA(fMet) + (6R)-10-formyltetrahydrofolate = N-formyl-L-methionyl-tRNA(fMet) + (6S)-5,6,7,8-tetrahydrofolate + H(+). In terms of biological role, attaches a formyl group to the free amino group of methionyl-tRNA(fMet). The formyl group appears to play a dual role in the initiator identity of N-formylmethionyl-tRNA by promoting its recognition by IF2 and preventing the misappropriation of this tRNA by the elongation apparatus. This Streptococcus uberis (strain ATCC BAA-854 / 0140J) protein is Methionyl-tRNA formyltransferase.